The following is a 151-amino-acid chain: UPF0178 protein Spea_2958 (151 aa).

The protein belongs to the UPF0178 family.

This chain is UPF0178 protein Spea_2958, found in Shewanella pealeana (strain ATCC 700345 / ANG-SQ1).